The primary structure comprises 386 residues: Cysteine protease Amb a 11.0101 (386 aa).

The signal sequence occupies residues Met-1 to Ser-22. Residues Leu-6–Val-20 form a T-cell epitope. MHC class II peptide able to activate CD(4+) T cells of the ragweed pollen-allergic patients indicated by significantly increased IL-2 production compared to non-allergic individuals. Not recognized by IgE of the patients allergic to ragweed pollen region. The propeptide at Phe-23–Arg-108 is activation peptide. N-linked (GlcNAc...) (complex) asparagine glycosylation is present at Asn-127. Intrachain disulfides connect Cys-152-Cys-193, Cys-186-Cys-226, and Cys-283-Cys-334. The active site involves Cys-155. Residues Gly-173–Cys-186 form a B-cell epitope. Binds to IgE of the patients allergic to ragweed pollen region. Active-site residues include His-289 and Asn-310. The tract at residues Ser-340–Gln-377 is disordered. The segment covering Pro-350–Phe-370 has biased composition (basic and acidic residues). A propeptide spans Lys-371–Leu-386 (removed in mature form).

It belongs to the peptidase C1 family. Homodimer. Autocatalytic proteolytic cleavage of N-terminal activation peptide. Post-translationally, N-glycosylated. Glycosylation is not required for binding to IgE. As to expression, expressed in pollen (at protein and mRNA level).

With respect to regulation, activated by L-cysteine. Inhibited by cysteine protease inhibitor E64 (L-trans-epoxysuccinyl-leucylamide-(4-guanido)-butane). Inhibited by cysteine/serine protease inhibitor leupeptin. Not inhibited by serine protease inhibitors 4-(2-aminoethyl)benzenesulfonyl fluoride hydrochloride (AEBSF) and phenylmethanesulfonyl fluoride (PMSF), metallo protease inhibitor bestatin or aspartic protease inhibitor pepstatin A. Functionally, cysteine protease. Hydrolyzes casein and synthetic peptide Boc-Val-Leu-Lys-7-amino-4-methylcoumarin (Boc-VLK-AMC) in vitro. This chain is Cysteine protease Amb a 11.0101, found in Ambrosia artemisiifolia (Common ragweed).